We begin with the raw amino-acid sequence, 358 residues long: uncharacterized protein (358 aa).

The N-terminal stretch at 1–15 is a signal peptide; the sequence is MITGKTISLPLSVIA. C16 is lipidated: N-palmitoyl cysteine. Residue C16 is the site of S-diacylglycerol cysteine attachment. Residues 331-358 form a disordered region; the sequence is PCGTGSPGNPPPNINSVAQHRISTNTNR. A compositionally biased stretch (polar residues) spans 347–358; that stretch reads VAQHRISTNTNR.

Its subcellular location is the cell membrane. This is an uncharacterized protein from Sinorhizobium fredii (strain NBRC 101917 / NGR234).